A 332-amino-acid polypeptide reads, in one-letter code: MQIGPYTIAPKVILAPMAGVTDKPFRLLCKRLGAGLAVSEMTISDPRFWGTRKSLHRMDHAGEPDPISVQIAGTEPQQLAEAARYNVDHGAQLIDINMGCPAKKVCNAWAGSALMRDEDLVARILSAVVRAVDVPVTLKIRTGWDCDHRNGPTIARIAQDCGIAALAVHGRTRDQHYTGTAEYATIAQIKAALQIPVIANGDIDSPQKAAQVLRDTGVDAVMIGRAAQGRPWIFGEVAHYLATGALLPPPSLAFVRDTLLGHLEALHAFYGQPQGVRIARKHLGWYAKDHPQSADFRAVVNRAETPEAQLALTRDYFDALIAGVPPPLHAAA.

Residues 16–18 and Q70 contribute to the FMN site; that span reads PMA. The active-site Proton donor is C100. Residues K139, 200 to 202, and 224 to 225 contribute to the FMN site; these read NGD and GR.

It belongs to the Dus family. DusB subfamily. FMN is required as a cofactor.

It carries out the reaction a 5,6-dihydrouridine in tRNA + NAD(+) = a uridine in tRNA + NADH + H(+). The catalysed reaction is a 5,6-dihydrouridine in tRNA + NADP(+) = a uridine in tRNA + NADPH + H(+). Functionally, catalyzes the synthesis of 5,6-dihydrouridine (D), a modified base found in the D-loop of most tRNAs, via the reduction of the C5-C6 double bond in target uridines. This Xanthomonas campestris pv. campestris (strain ATCC 33913 / DSM 3586 / NCPPB 528 / LMG 568 / P 25) protein is tRNA-dihydrouridine synthase B.